A 172-amino-acid chain; its full sequence is MAINNENELEYKLIKKNKNPKISNSKKKNSTRPALQDKTNQTLPIHQNQAFSNILPSDFSIIKTPETKTADDFPVNGYEGLNILKFDLELFYKLKPVATSTPKSCMRTGSNLFLNETVKHVPDERLVSNIKNTQTKDSITRDSAYYHRKTMTESIIKTLAAFDAEVDEIILF.

Positions 15 to 30 (KKNKNPKISNSKKKNS) are enriched in basic residues. Positions 15 to 43 (KKNKNPKISNSKKKNSTRPALQDKTNQTL) are disordered. A compositionally biased stretch (polar residues) spans 31–43 (TRPALQDKTNQTL). Positions 100–102 (STP) match the POLO box domain (PBD)-binding motif.

As to quaternary structure, interacts with rec8, Interacts with plo1.

It localises to the nucleus. Its subcellular location is the chromosome. The protein resides in the centromere. It is found in the kinetochore. Plays an important role in chromosome segregation during meiosis I by allowing meiotic rec8 to establish cohesion at the centromeric central core and thereby promote the side-by-side structure of kinetochores at meiosis I. Enables monopolar attachment during meiosis I. Required to facilitate kinetochore mono-orientation during meiosis I, when kinetochores on sister chromosomes face the same direction and are thus captured and pulled by spindle fibers from the same pole. Acts in collaboration with plo1. This chain is Monopolar attachment protein 1 (moa1), found in Schizosaccharomyces pombe (strain 972 / ATCC 24843) (Fission yeast).